The following is a 211-amino-acid chain: Major fimbrial subunit (211 aa).

The signal sequence occupies residues 1–20 (MKKTLLGSLILLAFAGNVQA). Cysteines 43 and 83 form a disulfide.

The protein belongs to the fimbrial protein family.

The protein localises to the fimbrium. In terms of biological role, mediates adherence to oropharyngeal epithelial cells. Helps the airway colonization process. The sequence is that of Major fimbrial subunit (hifA) from Haemophilus influenzae.